The chain runs to 620 residues: Putative ribonuclease H protein At1g65750 (620 aa).

The region spanning C456–S586 is the RNase H type-1 domain. Mg(2+) is bound by residues D465, E505, D529, and D578.

Mg(2+) is required as a cofactor.

It catalyses the reaction Endonucleolytic cleavage to 5'-phosphomonoester.. In Arabidopsis thaliana (Mouse-ear cress), this protein is Putative ribonuclease H protein At1g65750.